We begin with the raw amino-acid sequence, 270 residues long: 4-hydroxy-tetrahydrodipicolinate reductase (270 aa).

NAD(+)-binding positions include 9 to 14 (GSGGRM) and Glu35. Arg36 contacts NADP(+). Residues 99 to 101 (GTT) and 123 to 126 (ASNY) each bind NAD(+). The active-site Proton donor/acceptor is His156. Residue His157 participates in (S)-2,3,4,5-tetrahydrodipicolinate binding. The Proton donor role is filled by Lys160. 166–167 (GT) contacts (S)-2,3,4,5-tetrahydrodipicolinate.

It belongs to the DapB family.

The protein resides in the cytoplasm. It carries out the reaction (S)-2,3,4,5-tetrahydrodipicolinate + NAD(+) + H2O = (2S,4S)-4-hydroxy-2,3,4,5-tetrahydrodipicolinate + NADH + H(+). The enzyme catalyses (S)-2,3,4,5-tetrahydrodipicolinate + NADP(+) + H2O = (2S,4S)-4-hydroxy-2,3,4,5-tetrahydrodipicolinate + NADPH + H(+). Its pathway is amino-acid biosynthesis; L-lysine biosynthesis via DAP pathway; (S)-tetrahydrodipicolinate from L-aspartate: step 4/4. Functionally, catalyzes the conversion of 4-hydroxy-tetrahydrodipicolinate (HTPA) to tetrahydrodipicolinate. The protein is 4-hydroxy-tetrahydrodipicolinate reductase of Histophilus somni (strain 2336) (Haemophilus somnus).